Reading from the N-terminus, the 312-residue chain is Ribonuclease Z (312 aa).

Residues His63, His65, Asp67, His68, His140, Asp211, and His269 each coordinate Zn(2+). Asp67 acts as the Proton acceptor in catalysis.

It belongs to the RNase Z family. In terms of assembly, homodimer. Requires Zn(2+) as cofactor.

The enzyme catalyses Endonucleolytic cleavage of RNA, removing extra 3' nucleotides from tRNA precursor, generating 3' termini of tRNAs. A 3'-hydroxy group is left at the tRNA terminus and a 5'-phosphoryl group is left at the trailer molecule.. In terms of biological role, zinc phosphodiesterase, which displays some tRNA 3'-processing endonuclease activity. Probably involved in tRNA maturation, by removing a 3'-trailer from precursor tRNA. The polypeptide is Ribonuclease Z (Shouchella clausii (strain KSM-K16) (Alkalihalobacillus clausii)).